A 455-amino-acid chain; its full sequence is L-serine dehydratase (455 aa).

It belongs to the iron-sulfur dependent L-serine dehydratase family. [4Fe-4S] cluster serves as cofactor.

The catalysed reaction is L-serine = pyruvate + NH4(+). It participates in carbohydrate biosynthesis; gluconeogenesis. The sequence is that of L-serine dehydratase (sdaA) from Streptomyces coelicolor (strain ATCC BAA-471 / A3(2) / M145).